A 584-amino-acid chain; its full sequence is Chaperonin GroEL 1 (584 aa).

ATP contacts are provided by residues 29 to 32, 86 to 90, Gly-413, and Asp-492; these read TIGP and DGTTT. The tract at residues 523-542 is disordered; that stretch reads EPEAAAPGGPGGDPMGGMGG. Residues 530-542 are compositionally biased toward gly residues; sequence GGPGGDPMGGMGG.

This sequence belongs to the chaperonin (HSP60) family. As to quaternary structure, forms a cylinder of 14 subunits composed of two heptameric rings stacked back-to-back. Interacts with the co-chaperonin GroES.

It localises to the cytoplasm. It catalyses the reaction ATP + H2O + a folded polypeptide = ADP + phosphate + an unfolded polypeptide.. Together with its co-chaperonin GroES, plays an essential role in assisting protein folding. The GroEL-GroES system forms a nano-cage that allows encapsulation of the non-native substrate proteins and provides a physical environment optimized to promote and accelerate protein folding. This chain is Chaperonin GroEL 1, found in Prochlorococcus marinus (strain MIT 9312).